The sequence spans 607 residues: UvrABC system protein C (607 aa).

One can recognise a GIY-YIG domain in the interval 29-106 (DKPGVYLMKD…IKKHNPKYNI (78 aa)). The region spanning 211-246 (GAILKALEKKMKEASENLEFERAKEYRDLMEDLKKV) is the UVR domain.

Belongs to the UvrC family. In terms of assembly, interacts with UvrB in an incision complex.

Its subcellular location is the cytoplasm. The UvrABC repair system catalyzes the recognition and processing of DNA lesions. UvrC both incises the 5' and 3' sides of the lesion. The N-terminal half is responsible for the 3' incision and the C-terminal half is responsible for the 5' incision. The sequence is that of UvrABC system protein C from Desulfitobacterium hafniense (strain Y51).